The primary structure comprises 63 residues: DNA gyrase inhibitor YacG (63 aa).

The Zn(2+) site is built by C9, C12, C28, and C32.

Belongs to the DNA gyrase inhibitor YacG family. As to quaternary structure, interacts with GyrB. Zn(2+) is required as a cofactor.

Functionally, inhibits all the catalytic activities of DNA gyrase by preventing its interaction with DNA. Acts by binding directly to the C-terminal domain of GyrB, which probably disrupts DNA binding by the gyrase. In Salmonella arizonae (strain ATCC BAA-731 / CDC346-86 / RSK2980), this protein is DNA gyrase inhibitor YacG.